A 925-amino-acid chain; its full sequence is Serine/threonine-protein kinase PLK4 (925 aa).

Residues 12 to 265 (FKVGNLLGKG…LSSVLDHPFM (254 aa)) form the Protein kinase domain. ATP-binding positions include 18-26 (LGKGSFAGV) and Lys41. N6-acetyllysine is present on residues Lys45 and Lys46. Residue Asp136 is the Proton acceptor of the active site. Disordered stretches follow at residues 262-283 (HPFM…EDSM) and 328-394 (KNSS…KTYS). Residues 330–341 (SSDFSSGDGSNF) are compositionally biased toward low complexity. A compositionally biased stretch (polar residues) spans 342 to 353 (CTQWGNPEQEAN). The segment covering 359 to 369 (RVIEDAEERPH) has biased composition (basic and acidic residues). Polar residues predominate over residues 381-391 (RASPSNQSRAK). Ser400 carries the phosphoserine modification. Residues 517–538 (EVMPQEPGLHPHSEQSKNRSME) are disordered. Over residues 525 to 536 (LHPHSEQSKNRS) the composition is skewed to basic and acidic residues. The region spanning 547 to 660 (TLRSITSPLI…SRFIQLVRSK (114 aa)) is the Cryptic POLO box 1 (CPB1) domain. A Cryptic POLO box 2 (CPB2) domain is found at 661 to 774 (TPKITYFTRY…GRKPGNTSSP (114 aa)). Ser778 carries the phosphoserine modification. The POLO box domain maps to 841-919 (QLLKSVFVKN…LSSILLMFSN (79 aa)).

Belongs to the protein kinase superfamily. Ser/Thr protein kinase family. CDC5/Polo subfamily. As to quaternary structure, homodimer. Interacts with CEP152 (via N-terminus). Interacts with CEP78; this interaction may be important for proper PLK4 localization to the centriole and PLK4-induced overduplication of centrioles. Interacts with CEP131. Interacts simultaneously with TENT5C and CEP192. Interacts with TENT5C; this interaction leads to the TENT5C recruitment in the centrosome. Interacts with CEP85; this interaction may be important in cell migration and centriole assembly. Post-translationally, ubiquitinated; leading to its degradation by the proteasome. Deubiquitinated by USP54; leading to PLK4 stabilization. Tyrosine-phosphorylated by TEC. In terms of processing, acetylation by KAT2A and KAT2B impairs kinase activity by shifting the kinase to an inactive conformation. Expressed in tissues associated with mitotic and meiotic cell division. Highly expressed in testis.

The protein localises to the cytoplasm. The protein resides in the cytoskeleton. Its subcellular location is the microtubule organizing center. It is found in the centrosome. It localises to the centriole. The protein localises to the nucleus. The protein resides in the nucleolus. Its subcellular location is the cleavage furrow. It carries out the reaction L-seryl-[protein] + ATP = O-phospho-L-seryl-[protein] + ADP + H(+). The enzyme catalyses L-threonyl-[protein] + ATP = O-phospho-L-threonyl-[protein] + ADP + H(+). In terms of biological role, serine/threonine-protein kinase that plays a central role in centriole duplication. Able to trigger procentriole formation on the surface of the parental centriole cylinder, leading to the recruitment of centriole biogenesis proteins such as SASS6, CPAP, CCP110, CEP135 and gamma-tubulin. When overexpressed, it is able to induce centrosome amplification through the simultaneous generation of multiple procentrioles adjoining each parental centriole during S phase. Phosphorylates 'Ser-151' of FBXW5 during the G1/S transition, leading to inhibit FBXW5 ability to ubiquitinate SASS6. Its central role in centriole replication suggests a possible role in tumorigenesis, centrosome aberrations being frequently observed in tumors. Phosphorylates CDC25C and CHEK2. Also involved in deuterosome-mediated centriole amplification in multiciliated that can generate more than 100 centrioles. Also involved in trophoblast differentiation by phosphorylating HAND1, leading to disrupt the interaction between HAND1 and MDFIC and activate HAND1. Required for the recruitment of STIL to the centriole and for STIL-mediated centriole amplification. Phosphorylates CEP131 at 'Ser-78' and PCM1 at 'Ser-372' which is essential for proper organization and integrity of centriolar satellites. This chain is Serine/threonine-protein kinase PLK4, found in Mus musculus (Mouse).